The sequence spans 536 residues: Probable cytochrome P450 12a5, mitochondrial (536 aa).

A heme-binding site is contributed by Cys482.

It belongs to the cytochrome P450 family. Requires heme as cofactor.

It localises to the mitochondrion membrane. The sequence is that of Probable cytochrome P450 12a5, mitochondrial (Cyp12a5) from Drosophila melanogaster (Fruit fly).